We begin with the raw amino-acid sequence, 1396 residues long: DNA-directed RNA polymerase subunit beta' (1396 aa).

Residues cysteine 73, cysteine 75, cysteine 88, and cysteine 91 each contribute to the Zn(2+) site. Mg(2+)-binding residues include aspartate 467, aspartate 469, and aspartate 471. Positions 817, 891, 898, and 901 each coordinate Zn(2+).

It belongs to the RNA polymerase beta' chain family. As to quaternary structure, the RNAP catalytic core consists of 2 alpha, 1 beta, 1 beta' and 1 omega subunit. When a sigma factor is associated with the core the holoenzyme is formed, which can initiate transcription. The cofactor is Mg(2+). Zn(2+) is required as a cofactor.

It carries out the reaction RNA(n) + a ribonucleoside 5'-triphosphate = RNA(n+1) + diphosphate. Its function is as follows. DNA-dependent RNA polymerase catalyzes the transcription of DNA into RNA using the four ribonucleoside triphosphates as substrates. The protein is DNA-directed RNA polymerase subunit beta' of Orientia tsutsugamushi (strain Ikeda) (Rickettsia tsutsugamushi).